Reading from the N-terminus, the 301-residue chain is Acetaldehyde dehydrogenase (301 aa).

Cys-130 acts as the Acyl-thioester intermediate in catalysis. NAD(+) is bound by residues 161-169 (SVGPGTRRN) and Asn-272.

It belongs to the acetaldehyde dehydrogenase family.

It catalyses the reaction acetaldehyde + NAD(+) + CoA = acetyl-CoA + NADH + H(+). The polypeptide is Acetaldehyde dehydrogenase (mhpF) (Cupriavidus taiwanensis (strain DSM 17343 / BCRC 17206 / CCUG 44338 / CIP 107171 / LMG 19424 / R1) (Ralstonia taiwanensis (strain LMG 19424))).